Reading from the N-terminus, the 337-residue chain is 1-aminocyclopropane-1-carboxylate deaminase (337 aa).

K50 is modified (N6-(pyridoxal phosphate)lysine).

Belongs to the ACC deaminase/D-cysteine desulfhydrase family. Homotrimer. The cofactor is pyridoxal 5'-phosphate.

It catalyses the reaction 1-aminocyclopropane-1-carboxylate + H2O = 2-oxobutanoate + NH4(+). Functionally, catalyzes a cyclopropane ring-opening reaction, the irreversible conversion of 1-aminocyclopropane-1-carboxylate (ACC) to ammonia and alpha-ketobutyrate. Allows growth on ACC as a nitrogen source. This is 1-aminocyclopropane-1-carboxylate deaminase from Mesorhizobium japonicum (strain LMG 29417 / CECT 9101 / MAFF 303099) (Mesorhizobium loti (strain MAFF 303099)).